The following is a 590-amino-acid chain: Phosphomethylpyrimidine synthase (590 aa).

Substrate contacts are provided by residues N197, M226, Y255, H291, 311–313 (SRG), 352–355 (DGLR), and E391. Zn(2+) is bound at residue H395. Y418 is a binding site for substrate. H459 provides a ligand contact to Zn(2+). [4Fe-4S] cluster-binding residues include C539, C542, and C547.

The protein belongs to the ThiC family. Requires [4Fe-4S] cluster as cofactor.

It carries out the reaction 5-amino-1-(5-phospho-beta-D-ribosyl)imidazole + S-adenosyl-L-methionine = 4-amino-2-methyl-5-(phosphooxymethyl)pyrimidine + CO + 5'-deoxyadenosine + formate + L-methionine + 3 H(+). The protein operates within cofactor biosynthesis; thiamine diphosphate biosynthesis. Catalyzes the synthesis of the hydroxymethylpyrimidine phosphate (HMP-P) moiety of thiamine from aminoimidazole ribotide (AIR) in a radical S-adenosyl-L-methionine (SAM)-dependent reaction. In Bacillus subtilis (strain 168), this protein is Phosphomethylpyrimidine synthase.